A 353-amino-acid chain; its full sequence is Uroporphyrinogen decarboxylase (353 aa).

Substrate contacts are provided by residues 29–33 (RQAGR), aspartate 78, tyrosine 154, serine 209, and histidine 322.

It belongs to the uroporphyrinogen decarboxylase family. Homodimer.

It is found in the cytoplasm. It catalyses the reaction uroporphyrinogen III + 4 H(+) = coproporphyrinogen III + 4 CO2. The protein operates within porphyrin-containing compound metabolism; protoporphyrin-IX biosynthesis; coproporphyrinogen-III from 5-aminolevulinate: step 4/4. Catalyzes the decarboxylation of four acetate groups of uroporphyrinogen-III to yield coproporphyrinogen-III. The sequence is that of Uroporphyrinogen decarboxylase from Bacillus velezensis (strain DSM 23117 / BGSC 10A6 / LMG 26770 / FZB42) (Bacillus amyloliquefaciens subsp. plantarum).